We begin with the raw amino-acid sequence, 174 residues long: Regenerating islet-derived protein 3-gamma (174 aa).

Positions 1-26 (MLPRVALTTMSWMLLSSLMLLSQVQG) are cleaved as a signal peptide. A propeptide spanning residues 27–37 (EDAKEDVPTSR) is cleaved from the precursor. 3 disulfides stabilise this stretch: Cys-40–Cys-51, Cys-68–Cys-170, and Cys-145–Cys-162. In terms of domain architecture, C-type lectin spans 47 to 171 (YGSYCYALFS…CISELPYVCK (125 aa)). Residues 103 to 118 (WIGLHDPTLGQEPNRG) are sufficient to activate EXTL3. Residue His-107 coordinates Zn(2+). An EPN motif is present at residues 114–116 (EPN). Zn(2+)-binding residues include Glu-121 and His-144.

As to quaternary structure, forms a hexameric membrane-permeabilizing oligomeric pore on membrane phospholipids. The hexamer is formed by three dimers related by helical symmetry. Forms filaments, filamentation traps pore complexes and limits damage to host cells. Interacts with EXTL3. Proteolytic processing by trypsin removes an inhibitory N-terminal propeptide and is essential for peptidoglycan binding and antibacterial activity. As to expression, expressed in injured skeletal muscles and sciatic nerve (at protein level). Expressed in the pancreas. Expression increases during the acute phase of pancreatitis.

It localises to the secreted. The protein localises to the cytoplasm. Its activity is regulated as follows. Lipopolysaccharide inhibits pore-forming activity, explaining why is bactericidal for Gram-positive but not Gram-negative bacteria. In terms of biological role, bactericidal C-type lectin which acts exclusively against Gram-positive bacteria and mediates bacterial killing by binding to surface-exposed carbohydrate moieties of peptidoglycan. Restricts bacterial colonization of the intestinal epithelial surface and consequently limits activation of adaptive immune responses by the microbiota. Acts as a hormone in response to different stimuli like anti-inflammatory signals, such as IL17A, or gut microbiome. Is secreted by different cell types to activate its receptor EXTL3 and induce cell specific signaling pathways. Induced by IL17A in keratinocytes, regulates keratinocyte proliferation and differentiation after skin injury. In parallel, inhibits skin inflammation through the inhibition of inflammatory cytokines such as IL6 and TNF. Induced by IL22 in lung epithelial cells, inhibits cytokine production and regulates allergic airway inflammation. Induced in small intestine by inulin-enriched diet and Lactobacillus gasseri enriched microbiome, plays a role in the improvement of gut barrier function, the regulation of energy balance and glucose levels. Modulates microbiota composition in duodenal contents. Produced by nociceptor in response to endotoxins, prevents endotoxic death by targeting kynurenine pathway in microglia. Its function is as follows. Has bacteriostatic activity. Functionally, has bactericidal activity against L.monocytogenes and methicillin-resistant S.aureus. The chain is Regenerating islet-derived protein 3-gamma from Rattus norvegicus (Rat).